The primary structure comprises 1192 residues: Protein WWC2 (1192 aa).

WW domains follow at residues L10–D43 and D57–K90. Coiled coils occupy residues K121–Q194 and E224–D256. Position 286 is a phosphoserine (S286). Residues L302 to T421 are a coiled coil. The disordered stretch occupies residues S441–N462. Residues E698 to Y821 enclose the C2 domain. Residues A859 to E887 adopt a coiled-coil conformation. 2 disordered regions span residues Q873–W895 and E911–H991. The segment covering L875–Q885 has biased composition (acidic residues). Over residues T923–P933 the composition is skewed to polar residues. The span at D938–R951 shows a compositional bias: basic and acidic residues. T1004 is subject to Phosphothreonine. Phosphoserine is present on S1022. The tract at residues S1031–C1050 is interaction with PRKCZ. The stretch at D1068–K1144 forms a coiled coil. A compositionally biased stretch (basic and acidic residues) spans Q1124–K1137. Residues Q1124 to E1143 are disordered.

It belongs to the WWC family. As to quaternary structure, forms homodimers and heterodimers with WWC1 and WWC3. Interacts with DLC1 and PRKCZ. Interacts (via WW domains) with LATS1 and LATS2.

The protein resides in the cytoplasm. Its subcellular location is the cytosol. Functionally, regulator of the Hippo signaling pathway, also known as the Salvador-Warts-Hippo (SWH) pathway. Enhances phosphorylation of LATS1 and YAP1 and negatively regulates cell proliferation and organ growth due to a suppression of the transcriptional activity of YAP1, the major effector of the Hippo pathway. This Homo sapiens (Human) protein is Protein WWC2.